A 492-amino-acid chain; its full sequence is Protein nucleotidyltransferase YdiU (492 aa).

ATP is bound by residues G91, G93, R94, K114, D126, G127, R180, and R187. Catalysis depends on D256, which acts as the Proton acceptor. Residues N257 and D266 each coordinate Mg(2+). D266 provides a ligand contact to ATP.

The protein belongs to the SELO family. Requires Mg(2+) as cofactor. It depends on Mn(2+) as a cofactor.

The catalysed reaction is L-seryl-[protein] + ATP = 3-O-(5'-adenylyl)-L-seryl-[protein] + diphosphate. The enzyme catalyses L-threonyl-[protein] + ATP = 3-O-(5'-adenylyl)-L-threonyl-[protein] + diphosphate. It carries out the reaction L-tyrosyl-[protein] + ATP = O-(5'-adenylyl)-L-tyrosyl-[protein] + diphosphate. It catalyses the reaction L-histidyl-[protein] + UTP = N(tele)-(5'-uridylyl)-L-histidyl-[protein] + diphosphate. The catalysed reaction is L-seryl-[protein] + UTP = O-(5'-uridylyl)-L-seryl-[protein] + diphosphate. The enzyme catalyses L-tyrosyl-[protein] + UTP = O-(5'-uridylyl)-L-tyrosyl-[protein] + diphosphate. Functionally, nucleotidyltransferase involved in the post-translational modification of proteins. It can catalyze the addition of adenosine monophosphate (AMP) or uridine monophosphate (UMP) to a protein, resulting in modifications known as AMPylation and UMPylation. In Synechococcus elongatus (strain ATCC 33912 / PCC 7942 / FACHB-805) (Anacystis nidulans R2), this protein is Protein nucleotidyltransferase YdiU.